The sequence spans 345 residues: Tryptophan--tRNA ligase (345 aa).

Residues 21–23 (QPT) and 30–31 (GN) each bind ATP. Residues 22–31 (PTADSYHLGN) carry the 'HIGH' region motif. D147 is a binding site for L-tryptophan. ATP-binding positions include 159–161 (GED), I198, and 207–211 (KMSKS). A 'KMSKS' region motif is present at residues 207–211 (KMSKS).

This sequence belongs to the class-I aminoacyl-tRNA synthetase family. In terms of assembly, homodimer.

The protein localises to the cytoplasm. It carries out the reaction tRNA(Trp) + L-tryptophan + ATP = L-tryptophyl-tRNA(Trp) + AMP + diphosphate + H(+). In terms of biological role, catalyzes the attachment of tryptophan to tRNA(Trp). This Corynebacterium glutamicum (strain ATCC 13032 / DSM 20300 / JCM 1318 / BCRC 11384 / CCUG 27702 / LMG 3730 / NBRC 12168 / NCIMB 10025 / NRRL B-2784 / 534) protein is Tryptophan--tRNA ligase.